Consider the following 172-residue polypeptide: Adenine phosphoribosyltransferase (172 aa).

The protein belongs to the purine/pyrimidine phosphoribosyltransferase family. In terms of assembly, homodimer.

The protein localises to the cytoplasm. The catalysed reaction is AMP + diphosphate = 5-phospho-alpha-D-ribose 1-diphosphate + adenine. Its pathway is purine metabolism; AMP biosynthesis via salvage pathway; AMP from adenine: step 1/1. Catalyzes a salvage reaction resulting in the formation of AMP, that is energically less costly than de novo synthesis. The sequence is that of Adenine phosphoribosyltransferase from Trichormus variabilis (strain ATCC 29413 / PCC 7937) (Anabaena variabilis).